Consider the following 249-residue polypeptide: Small ribosomal subunit protein uS3 (249 aa).

Residues valine 39 to arginine 107 enclose the KH type-2 domain. Residues leucine 215 to glycine 249 are disordered. The segment covering glycine 230–glycine 249 has biased composition (basic and acidic residues).

This sequence belongs to the universal ribosomal protein uS3 family. As to quaternary structure, part of the 30S ribosomal subunit. Forms a tight complex with proteins S10 and S14.

Its function is as follows. Binds the lower part of the 30S subunit head. Binds mRNA in the 70S ribosome, positioning it for translation. The chain is Small ribosomal subunit protein uS3 from Caulobacter sp. (strain K31).